A 240-amino-acid chain; its full sequence is Large ribosomal subunit protein bL25 (240 aa).

Disordered stretches follow at residues 1–20 and 220–240; these read MAEN…GPAR and PAAG…KGKK. Low complexity predominate over residues 220–229; the sequence is PAAGAAPAKG. Residues 230–240 show a composition bias toward basic and acidic residues; sequence GEAKGGDKGKK.

This sequence belongs to the bacterial ribosomal protein bL25 family. CTC subfamily. In terms of assembly, part of the 50S ribosomal subunit; part of the 5S rRNA/L5/L18/L25 subcomplex. Contacts the 5S rRNA. Binds to the 5S rRNA independently of L5 and L18.

Functionally, this is one of the proteins that binds to the 5S RNA in the ribosome where it forms part of the central protuberance. The sequence is that of Large ribosomal subunit protein bL25 from Anaeromyxobacter dehalogenans (strain 2CP-C).